We begin with the raw amino-acid sequence, 185 residues long: Elongation factor P (185 aa).

This sequence belongs to the elongation factor P family.

The protein localises to the cytoplasm. The protein operates within protein biosynthesis; polypeptide chain elongation. Its function is as follows. Involved in peptide bond synthesis. Stimulates efficient translation and peptide-bond synthesis on native or reconstituted 70S ribosomes in vitro. Probably functions indirectly by altering the affinity of the ribosome for aminoacyl-tRNA, thus increasing their reactivity as acceptors for peptidyl transferase. This is Elongation factor P from Burkholderia multivorans (strain ATCC 17616 / 249).